The primary structure comprises 262 residues: GTP cyclohydrolase 1 type 2 homolog (262 aa).

A divalent metal cation-binding residues include histidine 64, histidine 65, aspartate 103, histidine 224, and glutamate 228.

Belongs to the GTP cyclohydrolase I type 2/NIF3 family. As to quaternary structure, homohexamer.

The sequence is that of GTP cyclohydrolase 1 type 2 homolog from Clostridium perfringens (strain 13 / Type A).